A 2116-amino-acid chain; its full sequence is Unconventional myosin-VIIb (2116 aa).

In terms of domain architecture, Myosin motor spans 65 to 760 (QGVDDMIRLG…QDTLLEVQRS (696 aa)). 158–165 (GESGAGKT) is an ATP binding site. Residues 637–659 (LDQLMKILTNCQPYFIRCIKPNE) form an actin-binding region. 6 IQ domains span residues 745–765 (IFLR…VLDR), 763–792 (LDRA…AAVT), 786–815 (QRRA…GFER), 814–834 (ERLQ…AMRQ), 832–861 (MRQR…AVVV), and 855–884 (KRRA…NAPL). The residue at position 904 (serine 904) is a Phosphoserine. The interval 916–1542 (EKVFGFLPAM…KKQGLLASEN (627 aa)) is mediates interaction with ANKS4B. One can recognise a MyTH4 1 domain in the interval 989–1192 (HIRRPLRYPL…PTWLELQAVK (204 aa)). Residues 1197–1506 (IPIQVILATG…EGLKERSIFA (310 aa)) form the FERM 1 domain. The residue at position 1371 (serine 1371) is a Phosphoserine. The SH3 domain maps to 1501-1567 (ERSIFAMALQ…PMACLYTIPT (67 aa)). The tract at residues 1501 to 2116 (ERSIFAMALQ…GSKAPALAST (616 aa)) is mediates interaction with CDHR2, CDHR5 and USH1C. MyTH4 domains follow at residues 1644–1793 (YSCE…EAAE) and 1790–1896 (EAAE…KLWL). At serine 1645 the chain carries Phosphoserine. The FERM 2 domain occupies 1799–2102 (ICHKIYFPND…SYVQQLLSAM (304 aa)).

Belongs to the TRAFAC class myosin-kinesin ATPase superfamily. Myosin family. As to quaternary structure, part of the IMAC/intermicrovillar adhesion complex/intermicrovillar tip-link complex composed of ANKS4B, MYO7B, USH1C, CDHR2 and CDHR5. Interacts with CDHR2. Interacts with CDHR5. Interacts with USH1C. Interacts with ANKS4B; requires initial interaction with USH1C. Interacts with CALML4; the interaction mediates the association of CALML4 with the IMAC/intermicrovillar adhesion complex.

It is found in the cytoplasm. The protein resides in the cytoskeleton. The protein localises to the cell projection. It localises to the microvillus. Its function is as follows. Myosins are actin-based motor molecules with ATPase activity. Their highly divergent tails are presumed to bind to membranous compartments, which would be moved relative to actin filaments. As part of the intermicrovillar adhesion complex/IMAC plays a role in epithelial brush border differentiation, controlling microvilli organization and length. May link the complex to the actin core bundle of microvilli. This chain is Unconventional myosin-VIIb, found in Homo sapiens (Human).